Consider the following 267-residue polypeptide: Regulatory protein RecX (267 aa).

Belongs to the RecX family.

The protein localises to the cytoplasm. Modulates RecA activity. This Staphylococcus carnosus (strain TM300) protein is Regulatory protein RecX.